Here is a 663-residue protein sequence, read N- to C-terminus: Polyunsaturated fatty acid lipoxygenase ALOX15 (663 aa).

One can recognise a PLAT domain in the interval 2–115 (GVYRIRVSTG…ILNLPEGTGC (114 aa)). The Lipoxygenase domain occupies 116-663 (TVVEDSQGLF…PSLVENSVAI (548 aa)). Fe cation contacts are provided by His361, His366, His541, His545, and Ile663.

The protein belongs to the lipoxygenase family. In terms of assembly, interacts with PEBP1; in response to IL13/interleukin-13, prevents the interaction of PEBP1 with RAF1 to activate the ERK signaling cascade. Fe cation is required as a cofactor. As to expression, found in pituitary and pineal glands as well as leukocytes, kidney, aorta, small intestine and cornea. Also expressed by resident peritoneal macrophages (at protein level).

Its subcellular location is the cytoplasm. The protein localises to the cytosol. It is found in the cell membrane. The protein resides in the lipid droplet. The enzyme catalyses (5Z,8Z,11Z,14Z)-eicosatetraenoate + O2 = (12S)-hydroperoxy-(5Z,8Z,10E,14Z)-eicosatetraenoate. It carries out the reaction (5Z,8Z,11Z,14Z)-eicosatetraenoate + O2 = (15S)-hydroperoxy-(5Z,8Z,11Z,13E)-eicosatetraenoate. It catalyses the reaction (9Z,12Z)-octadecadienoate + O2 = (13S)-hydroperoxy-(9Z,11E)-octadecadienoate. The catalysed reaction is (5Z,8Z,11Z,14Z)-eicosatetraenoate + 2 O2 = (14R,15S)-dihydroperoxy-(5Z,8Z,10E,12E)-eicosatetraenoate. The enzyme catalyses (5Z,8Z,11Z,14Z)-eicosatetraenoate + 2 O2 = (8S,15S)-dihydroperoxy-(5Z,9E,11Z,13E)-eicosatetraenoate. It carries out the reaction (14S,15R)-epoxy-(5Z,8Z,11Z)-eicosatrienoate + O2 = (8S)-hydroperoxy-(14S,15R)-epoxy-(5Z,9E,11Z)-eicosatrienoate. It catalyses the reaction (14S,15R)-epoxy-(5Z,8Z,11Z)-eicosatrienoate + O2 = (12S)-hydroperoxy-(14S,15R)-epoxy-(5Z,8Z,10E)-eicosatrienoate. The catalysed reaction is (14R,15S)-epoxy-(5Z,8Z,11Z)-eicosatrienoate + O2 = (5S)-hydroperoxy-(14R,15S)-epoxy-(6E,8Z,11Z)-eicosatrienoate. The enzyme catalyses (14R,15S)-epoxy-(5Z,8Z,11Z)-eicosatrienoate + O2 = (12S)-hydroperoxy-(14R,15S)-epoxy-(5Z,8Z,10E)-eicosatrienoate. It carries out the reaction (15R)-hydroperoxy-(5Z,8Z,11Z,13E)-eicosatetraenoate = 15-oxo-(5Z,8Z,11Z,13E)-eicosatetraenoate + H2O. It catalyses the reaction (15S)-hydroperoxy-(5Z,8Z,11Z,13E)-eicosatetraenoate = (14S,15S)-epoxy-(5Z,8Z,10E,12E)-eicosatetraenoate + H2O. The catalysed reaction is (12S)-hydroperoxy-(5Z,8Z,10E,14Z)-eicosatetraenoate = (8S)-hydroxy-(11S,12S)-epoxy-(5Z,9E,14Z)-eicosatrienoate. The enzyme catalyses (4Z,7Z,10Z,13Z,16Z)-docosapentaenoate + O2 = 14-hydroperoxy-(4Z,7Z,10Z,12E,16Z)-docosapentaenoate. It carries out the reaction (7Z,10Z,13Z,16Z,19Z)-docosapentaenoate + O2 = 14-hydroperoxy-(7Z,10Z,12E,16Z,19Z)-docosapentaenoate. It catalyses the reaction (4Z,7Z,10Z,13Z,16Z,19Z)-docosahexaenoate + O2 = (14S)-hydroperoxy-(4Z,7Z,10Z,12E,16Z,19Z)-docosahexaenoate. The catalysed reaction is (4Z,7Z,10Z,13Z,16Z,19Z)-docosahexaenoate + O2 = (17S)-hydroperoxy-(4Z,7Z,10Z,13Z,15E,19Z)-docosahexaenoate. The enzyme catalyses (7S)-hydroperoxy-(4Z,8E,10Z,13Z,16Z,19Z)-docosahexaenoate + O2 = (7S,14S)-dihydroperoxy-(4Z,8E,10Z,12E,16Z,19Z)-docosahexaenoate. It carries out the reaction (7S)-hydroperoxy-(4Z,8E,10Z,13Z,16Z,19Z)-docosahexaenoate + O2 = (7S,17S)-dihydroperoxy-(4Z,8E,10Z,13Z,15E,19Z)-docosahexaenoate. It catalyses the reaction (4Z,7Z,10Z,13Z,16Z,19Z)-docosahexaenoate + O2 = (11S)-hydroperoxy-(4Z,7Z,9E,13Z,16Z,19Z)-docosahexaenoate. The catalysed reaction is N-(5Z,8Z,11Z,14Z)-eicosatetraenoyl-taurine + O2 = N-(12S)-hydroperoxy-(5Z,8Z,10E,14Z)-eicosatetraenoyl-taurine. The enzyme catalyses N-(5Z,8Z,11Z,14Z)-eicosatetraenoyl-gamma-aminobutanoate + O2 = N-(12S)-hydroperoxy-(5Z,8Z,10E,14Z)-eicosatetraenoyl-gamma-aminobutanoate. It carries out the reaction N-(5Z,8Z,11Z,14Z)-eicosatetraenoyl-glycine + O2 = N-(12S)-hydroperoxy-(5Z,8Z,10E,14Z)-eicosatetraenoyl-glycine. It catalyses the reaction N-(5Z,8Z,11Z,14Z)-eicosatetraenoyl-L-alanine + O2 = N-(12S)-hydroperoxy-(5Z,8Z,10E,14Z)-eicosatetraenoyl-alanine. The catalysed reaction is N-(5Z,8Z,11Z,14Z)-eicosatetraenoyl-taurine + O2 = N-(15S)-hydroperoxy-(5Z,8Z,11Z,13E)-eicosatetraenoyl-taurine. The enzyme catalyses N-(5Z,8Z,11Z,14Z)-eicosatetraenoyl-gamma-aminobutanoate + O2 = N-(15S)-hydroperoxy-(5Z,8Z,11Z,13E)-eicosatetraenoyl-gamma-aminobutanoate. It carries out the reaction N-(5Z,8Z,11Z,14Z)-eicosatetraenoyl-glycine + O2 = N-(15S)-hydroperoxy-(5Z,8Z,11Z,13E)-eicosatetraenoyl-glycine. It catalyses the reaction N-(5Z,8Z,11Z,14Z)-eicosatetraenoyl-L-alanine + O2 = N-(15S)-hydroperoxy-(5Z,8Z,11Z,13E)-eicosatetraenoyl-alanine. It participates in lipid metabolism; hydroperoxy eicosatetraenoic acid biosynthesis. Functionally, non-heme iron-containing dioxygenase that catalyzes the stereo-specific peroxidation of free and esterified polyunsaturated fatty acids generating a spectrum of bioactive lipid mediators. It inserts peroxyl groups at C12 or C15 of arachidonate ((5Z,8Z,11Z,14Z)-eicosatetraenoate) producing both 12-hydroperoxyeicosatetraenoate/12-HPETE and 15-hydroperoxyeicosatetraenoate/15-HPETE. It may then act on 12-HPETE to produce hepoxilins, which may show pro-inflammatory properties. Can also peroxidize linoleate ((9Z,12Z)-octadecadienoate) to 13-hydroperoxyoctadecadienoate. May participate in the sequential oxidations of DHA ((4Z,7Z,10Z,13Z,16Z,19Z)-docosahexaenoate) to generate specialized pro-resolving mediators (SPMs)like resolvin D5 ((7S,17S)-diHPDHA) and (7S,14S)-diHPDHA, that actively down-regulate the immune response and have anti-aggregation properties with platelets. Can convert epoxy fatty acids to hydroperoxy-epoxides derivatives followed by an intramolecular nucleophilic substitution leading to the formation of monocyclic endoperoxides. Plays an important role during the maintenance of self-tolerance by peroxidizing membrane-bound phosphatidylethanolamine which can then signal the sorting process for clearance of apoptotic cells during inflammation and prevent an autoimmune response. In addition to its role in the immune and inflammatory responses, this enzyme may play a role in epithelial wound healing in the cornea through production of lipoxin A4 (LXA(4)) and docosahexaenoic acid-derived neuroprotectin D1 (NPD1; 10R,17S-HDHA), both lipid autacoids exhibit anti-inflammatory and neuroprotective properties. Furthermore, it may regulate actin polymerization which is crucial for several biological processes such as the phagocytosis of apoptotic cells. It is also implicated in the generation of endogenous ligands for peroxisome proliferator activated receptor (PPAR-gamma), hence modulating macrophage development and function. It may also exert a negative effect on skeletal development by regulating bone mass through this pathway. As well as participates in ER stress and downstream inflammation in adipocytes, pancreatic islets, and liver. Finally, it is also involved in the cellular response to IL13/interleukin-13. The protein is Polyunsaturated fatty acid lipoxygenase ALOX15 of Mus musculus (Mouse).